The chain runs to 432 residues: 3-phosphoshikimate 1-carboxyvinyltransferase (432 aa).

3 residues coordinate 3-phosphoshikimate: lysine 23, serine 24, and arginine 28. Residue lysine 23 participates in phosphoenolpyruvate binding. Phosphoenolpyruvate contacts are provided by glycine 95 and arginine 123. 3-phosphoshikimate is bound by residues serine 167, glutamine 169, aspartate 317, and lysine 344. Glutamine 169 contacts phosphoenolpyruvate. The active-site Proton acceptor is aspartate 317. Phosphoenolpyruvate-binding residues include arginine 348 and arginine 390.

The protein belongs to the EPSP synthase family. Monomer.

It localises to the cytoplasm. The enzyme catalyses 3-phosphoshikimate + phosphoenolpyruvate = 5-O-(1-carboxyvinyl)-3-phosphoshikimate + phosphate. It participates in metabolic intermediate biosynthesis; chorismate biosynthesis; chorismate from D-erythrose 4-phosphate and phosphoenolpyruvate: step 6/7. In terms of biological role, catalyzes the transfer of the enolpyruvyl moiety of phosphoenolpyruvate (PEP) to the 5-hydroxyl of shikimate-3-phosphate (S3P) to produce enolpyruvyl shikimate-3-phosphate and inorganic phosphate. The polypeptide is 3-phosphoshikimate 1-carboxyvinyltransferase (Staphylococcus aureus (strain bovine RF122 / ET3-1)).